A 460-amino-acid polypeptide reads, in one-letter code: ATP synthase subunit beta (460 aa).

ATP is bound at residue 150-157; that stretch reads GGAGVGKT.

It belongs to the ATPase alpha/beta chains family. In terms of assembly, F-type ATPases have 2 components, CF(1) - the catalytic core - and CF(0) - the membrane proton channel. CF(1) has five subunits: alpha(3), beta(3), gamma(1), delta(1), epsilon(1). CF(0) has three main subunits: a(1), b(2) and c(9-12). The alpha and beta chains form an alternating ring which encloses part of the gamma chain. CF(1) is attached to CF(0) by a central stalk formed by the gamma and epsilon chains, while a peripheral stalk is formed by the delta and b chains.

It localises to the cell inner membrane. The enzyme catalyses ATP + H2O + 4 H(+)(in) = ADP + phosphate + 5 H(+)(out). Its function is as follows. Produces ATP from ADP in the presence of a proton gradient across the membrane. The catalytic sites are hosted primarily by the beta subunits. The protein is ATP synthase subunit beta of Pectobacterium carotovorum subsp. carotovorum (strain PC1).